The following is a 503-amino-acid chain: D-xylose-proton symporter-like 1 (503 aa).

The interval 1–23 (MGFDPENQSISSVGQVVGDSSSG) is disordered. Residues 8 to 23 (QSISSVGQVVGDSSSG) are compositionally biased toward low complexity. 12 helical membrane passes run 51–73 (FLFP…CAIM), 95–115 (IITS…FSVA), 129–149 (FLYL…ILII), 152–172 (VTYG…IAET), 190–210 (VLGM…ISGW), 213–233 (MYAT…WLPA), 305–325 (ALTI…PSVL), 346–366 (ISIL…IVID), 374–394 (LLCG…YYMF), 405–425 (ALLL…WLMI), 437–457 (GISL…FAFS), and 467–487 (ILFC…YYIV).

The protein belongs to the major facilitator superfamily. Sugar transporter (TC 2.A.1.1) family.

Its subcellular location is the membrane. The polypeptide is D-xylose-proton symporter-like 1 (Arabidopsis thaliana (Mouse-ear cress)).